The primary structure comprises 351 residues: Probable RNA methyltransferase BAV1540 (351 aa).

Catalysis depends on glutamate 90, which acts as the Proton acceptor. Residues 93–319 form the Radical SAM core domain; it reads LLPRDGLCVS…VKVRNSAGQD (227 aa). Cysteine 100 and cysteine 324 form a disulfide bridge. Residues cysteine 107, cysteine 111, and cysteine 114 each coordinate [4Fe-4S] cluster. S-adenosyl-L-methionine contacts are provided by residues 152–153, serine 182, 205–207, and asparagine 281; these read GE and SLH. The active-site S-methylcysteine intermediate is cysteine 324.

Belongs to the radical SAM superfamily. RlmN family. Requires [4Fe-4S] cluster as cofactor.

The protein resides in the cytoplasm. This is Probable RNA methyltransferase BAV1540 from Bordetella avium (strain 197N).